Consider the following 396-residue polypeptide: Elongation factor Tu 1 (396 aa).

The region spanning 10–206 is the tr-type G domain; that stretch reads KPHVNVGTIG…ALDTYIPTPE (197 aa). The tract at residues 19–26 is G1; sequence GHVDHGKT. 19–26 contributes to the GTP binding site; it reads GHVDHGKT. A Mg(2+)-binding site is contributed by T26. A G2 region spans residues 60-64; it reads GITIN. The interval 81 to 84 is G3; sequence DCPG. Residues 81 to 85 and 136 to 139 each bind GTP; these read DCPGH and NKCD. Residues 136–139 form a G4 region; the sequence is NKCD. A G5 region spans residues 174 to 176; it reads SAK.

Belongs to the TRAFAC class translation factor GTPase superfamily. Classic translation factor GTPase family. EF-Tu/EF-1A subfamily. Monomer.

The protein localises to the cytoplasm. The catalysed reaction is GTP + H2O = GDP + phosphate + H(+). Its function is as follows. GTP hydrolase that promotes the GTP-dependent binding of aminoacyl-tRNA to the A-site of ribosomes during protein biosynthesis. This Acidovorax sp. (strain JS42) protein is Elongation factor Tu 1.